Reading from the N-terminus, the 389-residue chain is 23S rRNA (uracil(747)-C(5))-methyltransferase RlmC (389 aa).

[4Fe-4S] cluster-binding residues include Cys5, Cys13, Cys16, and Cys94. The S-adenosyl-L-methionine site is built by Gln219, Phe248, Glu275, and Asn321. Cys348 functions as the Nucleophile in the catalytic mechanism.

It belongs to the class I-like SAM-binding methyltransferase superfamily. RNA M5U methyltransferase family. RlmC subfamily.

The catalysed reaction is uridine(747) in 23S rRNA + S-adenosyl-L-methionine = 5-methyluridine(747) in 23S rRNA + S-adenosyl-L-homocysteine + H(+). In terms of biological role, catalyzes the formation of 5-methyl-uridine at position 747 (m5U747) in 23S rRNA. This chain is 23S rRNA (uracil(747)-C(5))-methyltransferase RlmC, found in Mannheimia succiniciproducens (strain KCTC 0769BP / MBEL55E).